We begin with the raw amino-acid sequence, 365 residues long: Phospho-N-acetylmuramoyl-pentapeptide-transferase (365 aa).

Transmembrane regions (helical) follow at residues H3 to I23, G54 to F74, P81 to L101, G119 to L139, I162 to V182, L198 to F218, L239 to A259, I263 to T283, L289 to V309, and F342 to L362.

This sequence belongs to the glycosyltransferase 4 family. MraY subfamily. The cofactor is Mg(2+).

It localises to the cell membrane. It carries out the reaction UDP-N-acetyl-alpha-D-muramoyl-L-alanyl-gamma-D-glutamyl-meso-2,6-diaminopimeloyl-D-alanyl-D-alanine + di-trans,octa-cis-undecaprenyl phosphate = di-trans,octa-cis-undecaprenyl diphospho-N-acetyl-alpha-D-muramoyl-L-alanyl-D-glutamyl-meso-2,6-diaminopimeloyl-D-alanyl-D-alanine + UMP. It functions in the pathway cell wall biogenesis; peptidoglycan biosynthesis. Its function is as follows. Catalyzes the initial step of the lipid cycle reactions in the biosynthesis of the cell wall peptidoglycan: transfers peptidoglycan precursor phospho-MurNAc-pentapeptide from UDP-MurNAc-pentapeptide onto the lipid carrier undecaprenyl phosphate, yielding undecaprenyl-pyrophosphoryl-MurNAc-pentapeptide, known as lipid I. This is Phospho-N-acetylmuramoyl-pentapeptide-transferase from Corynebacterium kroppenstedtii (strain DSM 44385 / JCM 11950 / CIP 105744 / CCUG 35717).